The sequence spans 158 residues: Regulator of sigma D (158 aa).

The protein belongs to the Rsd/AlgQ family. Interacts with RpoD.

It is found in the cytoplasm. Binds RpoD and negatively regulates RpoD-mediated transcription activation by preventing the interaction between the primary sigma factor RpoD with the catalytic core of the RNA polymerase and with promoter DNA. May be involved in replacement of the RNA polymerase sigma subunit from RpoD to RpoS during the transition from exponential growth to the stationary phase. This is Regulator of sigma D from Escherichia fergusonii (strain ATCC 35469 / DSM 13698 / CCUG 18766 / IAM 14443 / JCM 21226 / LMG 7866 / NBRC 102419 / NCTC 12128 / CDC 0568-73).